A 229-amino-acid polypeptide reads, in one-letter code: Ras-like protein rasV (229 aa).

GTP is bound at residue Gly40–Thr47. The Effector region motif lies at Tyr62–Tyr70. GTP contacts are provided by residues Asp87 to Gln91 and Asn146 to Asp149. Cys226 carries the post-translational modification Cysteine methyl ester. A lipid anchor (S-geranylgeranyl cysteine) is attached at Cys226. A propeptide spans Lys227 to Met229 (removed in mature form).

The protein belongs to the small GTPase superfamily. Ras family.

It localises to the cell membrane. The enzyme catalyses GTP + H2O = GDP + phosphate + H(+). Ras proteins bind GDP/GTP and possess intrinsic GTPase activity. The sequence is that of Ras-like protein rasV (rasV) from Dictyostelium discoideum (Social amoeba).